Consider the following 1367-residue polypeptide: Mediator of RNA polymerase II transcription subunit 23 (1367 aa).

The interval 1343 to 1367 (PPQALNSGSPAPQSNQVPASLPVTQ) is disordered. Polar residues predominate over residues 1346–1367 (ALNSGSPAPQSNQVPASLPVTQ).

The protein belongs to the Mediator complex subunit 23 family. As to quaternary structure, component of the Mediator complex, which is composed of MED1, MED4, MED6, MED7, MED8, MED9, MED10, MED11, MED12, MED13, MED13L, MED14, MED15, MED16, MED17, MED18, MED19, MED20, MED21, MED22, MED23, MED24, MED25, MED26, MED27, MED29, MED30, MED31, CCNC, CDK8 and CDC2L6/CDK11. The MED12, MED13, CCNC and CDK8 subunits form a distinct module termed the CDK8 module. Mediator containing the CDK8 module is less active than Mediator lacking this module in supporting transcriptional activation. Individual preparations of the Mediator complex lacking one or more distinct subunits have been variously termed ARC, CRSP, DRIP, PC2, SMCC and TRAP. Interacts with CEBPB (when not methylated), CTNNB1, and GLI3. Interacts with CDK8 and ELK1.

It localises to the nucleus. Component of the Mediator complex, a coactivator involved in the regulated transcription of nearly all RNA polymerase II-dependent genes. Mediator functions as a bridge to convey information from gene-specific regulatory proteins to the basal RNA polymerase II transcription machinery. Mediator is recruited to promoters by direct interactions with regulatory proteins and serves as a scaffold for the assembly of a functional pre-initiation complex with RNA polymerase II and the general transcription factors. Also required for transcriptional activation subsequent to the assembly of the pre-initiation complex. Required for transcriptional activation by adenovirus E1A protein. Required for ELK1-dependent transcriptional activation in response to activated Ras signaling. In Mus musculus (Mouse), this protein is Mediator of RNA polymerase II transcription subunit 23 (Med23).